The primary structure comprises 185 residues: Probable NEDD8-conjugating enzyme Ubc12-like (185 aa).

A disordered region spans residues 8 to 29 (KEKQREESQSNNGRGASTVKKQ). A compositionally biased stretch (polar residues) spans 16–28 (QSNNGRGASTVKK). Positions 31–176 (AGELRLHKDI…VRRAMMGGQV (146 aa)) constitute a UBC core domain. The Glycyl thioester intermediate role is filled by cysteine 114.

This sequence belongs to the ubiquitin-conjugating enzyme family. UBC12 subfamily.

It functions in the pathway protein modification; protein neddylation. Functionally, accepts the ubiquitin-like protein NEDD8/RUB1 from the ECR1-AXR1 E1 complex and catalyzes its covalent attachment to other proteins. The protein is Probable NEDD8-conjugating enzyme Ubc12-like (RCE2) of Arabidopsis thaliana (Mouse-ear cress).